Here is a 262-residue protein sequence, read N- to C-terminus: 3-deoxy-manno-octulosonate cytidylyltransferase (262 aa).

The protein belongs to the KdsB family.

The protein localises to the cytoplasm. The enzyme catalyses 3-deoxy-alpha-D-manno-oct-2-ulosonate + CTP = CMP-3-deoxy-beta-D-manno-octulosonate + diphosphate. Its pathway is nucleotide-sugar biosynthesis; CMP-3-deoxy-D-manno-octulosonate biosynthesis; CMP-3-deoxy-D-manno-octulosonate from 3-deoxy-D-manno-octulosonate and CTP: step 1/1. It functions in the pathway bacterial outer membrane biogenesis; lipopolysaccharide biosynthesis. Its function is as follows. Activates KDO (a required 8-carbon sugar) for incorporation into bacterial lipopolysaccharide in Gram-negative bacteria. The sequence is that of 3-deoxy-manno-octulosonate cytidylyltransferase from Koribacter versatilis (strain Ellin345).